The chain runs to 266 residues: PTS system mannose-specific EIIC component (266 aa).

Methionine 1 is modified (N-formylmethionine). The Periplasmic portion of the chain corresponds to 1–4; that stretch reads MEIT. The region spanning 1–237 is the PTS EIIC type-4 domain; that stretch reads MEITTLQIVL…GVIGTVMAVL (237 aa). An intramembrane segment occupies 5–43; that stretch reads TLQIVLVFIVACIAGMGSILDEFQFHRPLIACTLVGIVL. At 44 to 46 the chain is on the periplasmic side; sequence GDM. An intramembrane segment occupies 47 to 86; the sequence is KTGIIIGGTLEMIALGWMNIGAAVAPDAALASIISTILVI. The Periplasmic segment spans residues 87-90; sequence AGHQ. Positions 91–124 form a transmembrane segment; sequence SIGAGIALAIPLAAAGQVLTIIVRTITVAFQHAA. Topologically, residues 125-132 are cytoplasmic; the sequence is DKAADNGN. The hydrophobic stretch at 133–160 threads the membrane; sequence LTAISWIHVSSLFLQAMRVAIPAVIVAL. At 161 to 176 the chain is on the periplasmic side; that stretch reads SVGTSEVQNMLNAIPE. Over 177 to 200 the chain traverses the membrane; the sequence is VVTNGLNIAGGMIVVVGYAMVINM. Topologically, residues 201–207 are cytoplasmic; the sequence is MRAGYLM. A transmembrane helix spans residues 208 to 218; the sequence is PFFYLGFVTAA. Residues 219–224 lie on the Periplasmic side of the membrane; it reads FTNFNL. Over 225 to 242 the chain traverses the membrane; sequence VALGVIGTVMAVLYIQLS. The Cytoplasmic portion of the chain corresponds to 243-266; the sequence is PKYNRVAGAPAQAAGNNDLDNELD.

Homotrimer of protomers that are composed of two subunits, IIC and IID.

It localises to the cell inner membrane. The phosphoenolpyruvate-dependent sugar phosphotransferase system (sugar PTS), a major carbohydrate active transport system, catalyzes the phosphorylation of incoming sugar substrates concomitantly with their translocation across the cell membrane. The enzyme II ManXYZ PTS system is involved in mannose transport. In Escherichia coli O157:H7, this protein is PTS system mannose-specific EIIC component (manY).